A 261-amino-acid polypeptide reads, in one-letter code: MTTMPDMQKTSDTRKIPINKVGVKDISYPIVVMDKNKKFQQTVARINMYVDLPHHFKGTHMSRFVEILNAYREDIALDKMEPILQKMKEKLGASSAHLEIEFPYFIEKRAPVSGARSLMEYTCTFCGSLGEEFDFVLGVQIPVTSLCPCSKELSRYGAHNQRSHITVRLRYTDFIWIEDLVAMIEECGSSPVWSLLKRVDEQYVTERAYENPKFVEDIVREVTQKLLAHDAITWFSVEAENFESIHKHSAYAAIERDKKMT.

Belongs to the GTP cyclohydrolase IV family.

It carries out the reaction GTP + H2O = 7,8-dihydroneopterin 3'-triphosphate + formate + H(+). Its pathway is cofactor biosynthesis; 7,8-dihydroneopterin triphosphate biosynthesis; 7,8-dihydroneopterin triphosphate from GTP: step 1/1. Converts GTP to 7,8-dihydroneopterin triphosphate. This Geobacter metallireducens (strain ATCC 53774 / DSM 7210 / GS-15) protein is GTP cyclohydrolase FolE2.